A 601-amino-acid chain; its full sequence is Arginine--tRNA ligase (601 aa).

A 'HIGH' region motif is present at residues 135–145 (ANPTGPLHLGH).

The protein belongs to the class-I aminoacyl-tRNA synthetase family. In terms of assembly, monomer.

It localises to the cytoplasm. It catalyses the reaction tRNA(Arg) + L-arginine + ATP = L-arginyl-tRNA(Arg) + AMP + diphosphate. The chain is Arginine--tRNA ligase from Gloeobacter violaceus (strain ATCC 29082 / PCC 7421).